A 229-amino-acid polypeptide reads, in one-letter code: Bcl-2-like protein 1 (229 aa).

A BH4 motif is present at residues 4 to 24 (SNRELVIDFVSYKLSQRGHCW). Positions 82–96 (VRQALRDAGDEFELR) match the BH3 motif. Positions 125 to 144 (ELFHDGVNWGRIVAFFSFGG) match the BH1 motif. Residues 176-191 (PWIQENGGWERFVDLY) carry the BH2 motif. A helical membrane pass occupies residues 206–223 (FNKWLLTGATVAGVLLLG).

Belongs to the Bcl-2 family. Highest expression in organs with lymphoid development.

Its subcellular location is the mitochondrion membrane. It localises to the nucleus membrane. The protein localises to the mitochondrion matrix. It is found in the cytoplasm. The protein resides in the cytoskeleton. Its subcellular location is the microtubule organizing center. It localises to the centrosome. The protein localises to the cytosol. It is found in the cytoplasmic vesicle. The protein resides in the secretory vesicle. Its subcellular location is the synaptic vesicle membrane. Its function is as follows. Dominant regulator of apoptotic cell death. The long form displays cell death repressor activity, whereas the short isoform promotes apoptosis. Also acts as a regulator of G2 checkpoint and progression to cytokinesis during mitosis. This chain is Bcl-2-like protein 1 (BCL2L1), found in Gallus gallus (Chicken).